The primary structure comprises 807 residues: DNA gyrase subunit B (807 aa).

The region spanning 429-543 (SELFIVEGDS…KGYLYIAQPP (115 aa)) is the Toprim domain. Mg(2+)-binding residues include E435, D508, and D510.

This sequence belongs to the type II topoisomerase GyrB family. In terms of assembly, heterotetramer, composed of two GyrA and two GyrB chains. In the heterotetramer, GyrA contains the active site tyrosine that forms a transient covalent intermediate with DNA, while GyrB binds cofactors and catalyzes ATP hydrolysis. Mg(2+) serves as cofactor. The cofactor is Mn(2+). It depends on Ca(2+) as a cofactor.

The protein resides in the cytoplasm. The catalysed reaction is ATP-dependent breakage, passage and rejoining of double-stranded DNA.. Its function is as follows. A type II topoisomerase that negatively supercoils closed circular double-stranded (ds) DNA in an ATP-dependent manner to modulate DNA topology and maintain chromosomes in an underwound state. Negative supercoiling favors strand separation, and DNA replication, transcription, recombination and repair, all of which involve strand separation. Also able to catalyze the interconversion of other topological isomers of dsDNA rings, including catenanes and knotted rings. Type II topoisomerases break and join 2 DNA strands simultaneously in an ATP-dependent manner. The polypeptide is DNA gyrase subunit B (Rickettsia conorii (strain ATCC VR-613 / Malish 7)).